Here is a 317-residue protein sequence, read N- to C-terminus: Aspartate carbamoyltransferase catalytic subunit (317 aa).

Carbamoyl phosphate-binding residues include Arg-66 and Thr-67. Lys-94 lines the L-aspartate pocket. Arg-116, His-144, and Gln-147 together coordinate carbamoyl phosphate. 2 residues coordinate L-aspartate: Arg-177 and Arg-231. Carbamoyl phosphate is bound by residues Gly-272 and Pro-273.

The protein belongs to the aspartate/ornithine carbamoyltransferase superfamily. ATCase family. As to quaternary structure, heterododecamer (2C3:3R2) of six catalytic PyrB chains organized as two trimers (C3), and six regulatory PyrI chains organized as three dimers (R2).

It catalyses the reaction carbamoyl phosphate + L-aspartate = N-carbamoyl-L-aspartate + phosphate + H(+). It functions in the pathway pyrimidine metabolism; UMP biosynthesis via de novo pathway; (S)-dihydroorotate from bicarbonate: step 2/3. In terms of biological role, catalyzes the condensation of carbamoyl phosphate and aspartate to form carbamoyl aspartate and inorganic phosphate, the committed step in the de novo pyrimidine nucleotide biosynthesis pathway. The protein is Aspartate carbamoyltransferase catalytic subunit of Bradyrhizobium sp. (strain BTAi1 / ATCC BAA-1182).